Reading from the N-terminus, the 160-residue chain is Putative pre-16S rRNA nuclease (160 aa).

Belongs to the YqgF nuclease family.

It localises to the cytoplasm. Functionally, could be a nuclease involved in processing of the 5'-end of pre-16S rRNA. The polypeptide is Putative pre-16S rRNA nuclease (Rhodopseudomonas palustris (strain BisB5)).